A 536-amino-acid polypeptide reads, in one-letter code: Phosphoenolpyruvate carboxykinase (ATP) (536 aa).

Positions 62, 203, and 209 each coordinate substrate. Residues Lys209, His228, and 244–252 (GLSGTGKTT) each bind ATP. Lys209 and His228 together coordinate Mn(2+). Residue Asp265 participates in Mn(2+) binding. ATP contacts are provided by residues Glu293, Arg329, 445 to 446 (RI), and Thr451. Substrate is bound at residue Arg329.

Belongs to the phosphoenolpyruvate carboxykinase (ATP) family. In terms of assembly, monomer. Mn(2+) is required as a cofactor.

It localises to the cytoplasm. The catalysed reaction is oxaloacetate + ATP = phosphoenolpyruvate + ADP + CO2. It functions in the pathway carbohydrate biosynthesis; gluconeogenesis. Involved in the gluconeogenesis. Catalyzes the conversion of oxaloacetate (OAA) to phosphoenolpyruvate (PEP) through direct phosphoryl transfer between the nucleoside triphosphate and OAA. The chain is Phosphoenolpyruvate carboxykinase (ATP) from Actinobacillus pleuropneumoniae serotype 5b (strain L20).